The sequence spans 408 residues: Potassium channel subfamily K member 13 (408 aa).

The Cytoplasmic portion of the chain corresponds to 1-19 (MAGRGFSWGPGHLNEDNAR). The helical transmembrane segment at 20-40 (FLLLAALIVLYLLGGAAVFSA) threads the bilayer. Residues Asn59 and Asn65 are each glycosylated (N-linked (GlcNAc...) asparagine). The pore-forming intramembrane region spans 95-115 (WDFTGAFYFVGTVVSTIGFGM). The K(+) site is built by Thr110, Ile111, and Gly112. The segment at 110–115 (TIGFGM) is selectivity filter 1. Residues 125 to 145 (IFLIFYGLVGCSSTILFFNLF) traverse the membrane as a helical segment. The Cytoplasmic segment spans residues 146–193 (LERLITIIAYIMKSCHQRQLRRRGALPQESLKDAGQCEVDSLAGWKPS). Residues 194–214 (VYYVMLILCTASILISCCASA) form a helical membrane-spanning segment. The pore-forming intramembrane region spans 224–244 (YFDSLYFCFVAFSTIGFGDLV). K(+) is bound by residues Thr237, Ile238, Gly239, and Phe240. A selectivity filter 2 region spans residues 237 to 242 (TIGFGD). A helical membrane pass occupies residues 263-283 (VFILMGVCCIYSLFNVISILI). Residues 284–408 (KQSLNWILRK…NRLAETSGDR (125 aa)) are Cytoplasmic-facing.

This sequence belongs to the two pore domain potassium channel (TC 1.A.1.8) family. Homodimer. Heterodimer with KCNK12. As to expression, expressed in microglia (at protein level).

It is found in the cell membrane. The catalysed reaction is K(+)(in) = K(+)(out). With respect to regulation, the channel conductance is activated by arachidonic acid and inhibited by Ba(2+) ions, volatile anesthetics such as halothane and antiarrhythmic drugs mexiletine and lidocaine. Insensitive to extracellular pH change. K(+) channel that conducts outward rectifying tonic currents potentiated by purinergic signals. Homo- and heterodimerizes to form functional channels with distinct regulatory and gating properties. Contributes most of K(+) currents at the plasma membrane of resting microglia. Maintains a depolarized membrane potential required for proper ramified microglia morphology and phagocytosis, selectively mediating microglial pruning of presynaptic compartments at hippocampal excitatory synapses. Upon local release of ATP caused by neuronal injury or infection, it is potentiated by P2RY12 and P2RX7 receptor signaling and contributes to ATP-triggered K(+) efflux underlying microglial NLRP3 inflammasome assembly and IL1B release. In Homo sapiens (Human), this protein is Potassium channel subfamily K member 13.